We begin with the raw amino-acid sequence, 379 residues long: UDP-4-amino-4-deoxy-L-arabinose--oxoglutarate aminotransferase (379 aa).

Lys182 carries the post-translational modification N6-(pyridoxal phosphate)lysine.

This sequence belongs to the DegT/DnrJ/EryC1 family. ArnB subfamily. In terms of assembly, homodimer. The cofactor is pyridoxal 5'-phosphate.

The catalysed reaction is UDP-4-amino-4-deoxy-beta-L-arabinose + 2-oxoglutarate = UDP-beta-L-threo-pentopyranos-4-ulose + L-glutamate. The protein operates within nucleotide-sugar biosynthesis; UDP-4-deoxy-4-formamido-beta-L-arabinose biosynthesis; UDP-4-deoxy-4-formamido-beta-L-arabinose from UDP-alpha-D-glucuronate: step 2/3. Its pathway is bacterial outer membrane biogenesis; lipopolysaccharide biosynthesis. Catalyzes the conversion of UDP-4-keto-arabinose (UDP-Ara4O) to UDP-4-amino-4-deoxy-L-arabinose (UDP-L-Ara4N). The modified arabinose is attached to lipid A and is required for resistance to polymyxin and cationic antimicrobial peptides. The chain is UDP-4-amino-4-deoxy-L-arabinose--oxoglutarate aminotransferase from Sodalis glossinidius (strain morsitans).